A 543-amino-acid polypeptide reads, in one-letter code: Limonene hydroxylase (543 aa).

The 233-residue stretch at 232–464 (VVTYNPSFEK…LRNVIERAFL (233 aa)) folds into the Sigma-54 factor interaction domain. ATP-binding positions include 260–267 (GETGSGKE) and 324–333 (ADGGTLFLDE).

It carries out the reaction (4S)-limonene + reduced [NADPH--hemoprotein reductase] + O2 = (1S,5R)-carveol + oxidized [NADPH--hemoprotein reductase] + H2O + H(+). The enzyme catalyses (4S)-limonene + reduced [NADPH--hemoprotein reductase] + O2 = (4S)-perillyl alcohol + oxidized [NADPH--hemoprotein reductase] + H2O + H(+). It catalyses the reaction perillyl alcohol + NAD(+) = perillyl aldehyde + NADH + H(+). The catalysed reaction is (1S,5R)-carveol + NADP(+) = (R)-carvone + NADPH + H(+). Involved in limonene hydroxylation to a mixture of carveol and perillyl alcohol as well as in dehydrogenation of these products to carvone and perillyl aldehyde. Aromatic alcohols containing an isopropyl or isopropenyl group at ring position 4 also served as substrates for the dehydrogenase activity. This is Limonene hydroxylase from Geobacillus stearothermophilus (Bacillus stearothermophilus).